Reading from the N-terminus, the 450-residue chain is Putative nucleolar protein 5-3 (450 aa).

Residues Ile-252–Gly-370 enclose the Nop domain. A disordered region spans residues Ala-375–Lys-423. Over residues Thr-399–Lys-423 the composition is skewed to basic and acidic residues.

This sequence belongs to the NOP5/NOP56 family.

The protein localises to the nucleus. Its subcellular location is the nucleolus. In terms of biological role, required for 60S ribosomal subunit biogenesis. In Arabidopsis thaliana (Mouse-ear cress), this protein is Putative nucleolar protein 5-3 (NOP5-3).